The chain runs to 84 residues: uncharacterized protein (84 aa).

This is an uncharacterized protein from Bacillus subtilis (strain 168).